The primary structure comprises 868 residues: Hopanoid transporter HpnN (868 aa).

Helical transmembrane passes span 16–36 (FAAFTVLIGVFLAVAAGFYTY), 273–293 (GAVVNGIGTVVVVLLILWMAL), 298–318 (IIFAVAANLVIGLSITTAVGL), 326–346 (LLSIAFAVLFVGLGVDFGIQF), 370–390 (YSAVPLSLAAMSTTAGFLSFL), 403–423 (IAGAGMAIAFFTSITVLPALL), 452–472 (IAIIVGTIGVALAGLPLLYFM), 710–730 (IVASFIQAGLWALLSISILLW), 740–760 (ALTLVPLLVAGAVTLEICVLI), 762–782 (LPLNFANIVALPLLLGVGVAF), 805–825 (AIFFSALTTATAFGSLWLSSH), and 834–854 (LLALSLLTTLGAVLLFQPALM). The 127-residue stretch at 299-425 (IFAVAANLVI…ITVLPALLKL (127 aa)) folds into the SSD domain.

The protein belongs to the resistance-nodulation-cell division (RND) (TC 2.A.6) family. MmpL subfamily.

It is found in the cell inner membrane. Functionally, essential for hopanoid transport from the cytoplasmic to the outer membrane. Required for the C(35) hopanoid, bacteriohopanetetrol, to remain localized to the mother cell type. The protein is Hopanoid transporter HpnN of Rhodopseudomonas palustris (strain TIE-1).